A 225-amino-acid polypeptide reads, in one-letter code: UPF0758 protein BCE33L4198 (225 aa).

The MPN domain maps to 103-225; the sequence is SIRNPEDCAR…FVSLKEKGHI (123 aa). Residues histidine 174, histidine 176, and aspartate 187 each contribute to the Zn(2+) site. The JAMM motif motif lies at 174-187; that stretch reads HNHPSGDPAPSRED.

This sequence belongs to the UPF0758 family.

This is UPF0758 protein BCE33L4198 from Bacillus cereus (strain ZK / E33L).